A 2222-amino-acid chain; its full sequence is DNA polymerase epsilon catalytic subunit A (2222 aa).

The segment at 90-110 (ETLSSGSNGGGNSNDGERVTT) is disordered. Positions 2108, 2111, 2130, and 2133 each coordinate Zn(2+). The segment at 2108–2133 (CEYCFFISDIDFCKAAPESIFSCVRC) adopts a CysA-type zinc-finger fold. Positions 2164, 2167, 2179, and 2181 each coordinate [4Fe-4S] cluster. Residues 2164-2181 (CSRCHKVKRDYMSAHCPC) carry the CysB motif motif.

Belongs to the DNA polymerase type-B family. DNA polymerase epsilon is a heterotetramer consisting of POL2, DPB2, DPB3 and DPB4. The cofactor is [4Fe-4S] cluster.

The protein resides in the nucleus. It carries out the reaction DNA(n) + a 2'-deoxyribonucleoside 5'-triphosphate = DNA(n+1) + diphosphate. Its function is as follows. Catalytic component of the DNA polymerase epsilon complex which participates in chromosomal DNA replication. Required during synthesis of the leading DNA strands at the replication fork, binds at/or near replication origins and moves along DNA with the replication fork. Has 3'-5' proofreading exonuclease activity that corrects errors arising during DNA replication. This Saccharomyces cerevisiae (strain ATCC 204508 / S288c) (Baker's yeast) protein is DNA polymerase epsilon catalytic subunit A (POL2).